The following is a 370-amino-acid chain: tRNA 2-selenouridine synthase (370 aa).

A Rhodanese domain is found at 12 to 136 (FLDDVPMMDM…MRTFLLETTQ (125 aa)). Cysteine 95 functions as the S-selanylcysteine intermediate in the catalytic mechanism.

This sequence belongs to the SelU family. In terms of assembly, monomer.

The catalysed reaction is 5-methylaminomethyl-2-thiouridine(34) in tRNA + selenophosphate + (2E)-geranyl diphosphate + H2O + H(+) = 5-methylaminomethyl-2-selenouridine(34) in tRNA + (2E)-thiogeraniol + phosphate + diphosphate. It carries out the reaction 5-methylaminomethyl-2-thiouridine(34) in tRNA + (2E)-geranyl diphosphate = 5-methylaminomethyl-S-(2E)-geranyl-thiouridine(34) in tRNA + diphosphate. The enzyme catalyses 5-methylaminomethyl-S-(2E)-geranyl-thiouridine(34) in tRNA + selenophosphate + H(+) = 5-methylaminomethyl-2-(Se-phospho)selenouridine(34) in tRNA + (2E)-thiogeraniol. It catalyses the reaction 5-methylaminomethyl-2-(Se-phospho)selenouridine(34) in tRNA + H2O = 5-methylaminomethyl-2-selenouridine(34) in tRNA + phosphate. Its function is as follows. Involved in the post-transcriptional modification of the uridine at the wobble position (U34) of tRNA(Lys), tRNA(Glu) and tRNA(Gln). Catalyzes the conversion of 2-thiouridine (S2U-RNA) to 2-selenouridine (Se2U-RNA). Acts in a two-step process involving geranylation of 2-thiouridine (S2U) to S-geranyl-2-thiouridine (geS2U) and subsequent selenation of the latter derivative to 2-selenouridine (Se2U) in the tRNA chain. In Pseudomonas putida (strain ATCC 47054 / DSM 6125 / CFBP 8728 / NCIMB 11950 / KT2440), this protein is tRNA 2-selenouridine synthase.